We begin with the raw amino-acid sequence, 113 residues long: Seminal vesicle secretory protein 4 (113 aa).

An N-terminal signal peptide occupies residues 1–21 (MNSTSLFLFSLLLLLVTGAIG). The interval 31-113 (SEETVRESFS…KSRFSQDALE (83 aa)) is disordered. Low complexity-rich tracts occupy residues 38-50 (SFSMGSRGHMSRS) and 83-98 (IISSSSDGSNMEGESS).

It belongs to the SVP2/SVP5/SVP6 family. Testis.

Its subcellular location is the secreted. It localises to the extracellular space. This is Seminal vesicle secretory protein 4 (Svs4) from Mus musculus (Mouse).